A 674-amino-acid polypeptide reads, in one-letter code: Probable copper-transporting P-type ATPase B (674 aa).

The interval 1–20 (MNHSNHMHHDNHESHHHYSG) is disordered. 6 consecutive transmembrane segments (helical) span residues 32-52 (FFVS…MGVN), 57-77 (FTFP…FFYG), 95-115 (GMMT…LYAF), 127-147 (TMDF…GHWI), 284-304 (GYLF…WMLI), and 315-335 (LVTV…PLVT). The active-site 4-aspartylphosphate intermediate is the Asp-367. Mg(2+)-binding residues include Asp-565 and Asp-569. 2 helical membrane-spanning segments follow: residues 623–645 (LWWG…AFIG) and 649–671 (SPAV…AFTL).

Belongs to the cation transport ATPase (P-type) (TC 3.A.3) family. Type IB subfamily.

It localises to the cell membrane. The enzyme catalyses Cu(+)(in) + ATP + H2O = Cu(+)(out) + ADP + phosphate + H(+). Its function is as follows. Involved in copper transport. The sequence is that of Probable copper-transporting P-type ATPase B (copB) from Staphylococcus haemolyticus (strain JCSC1435).